We begin with the raw amino-acid sequence, 141 residues long: Large ribosomal subunit protein uL11 (141 aa).

This sequence belongs to the universal ribosomal protein uL11 family. Part of the ribosomal stalk of the 50S ribosomal subunit. Interacts with L10 and the large rRNA to form the base of the stalk. L10 forms an elongated spine to which L12 dimers bind in a sequential fashion forming a multimeric L10(L12)X complex. One or more lysine residues are methylated.

Its function is as follows. Forms part of the ribosomal stalk which helps the ribosome interact with GTP-bound translation factors. The chain is Large ribosomal subunit protein uL11 from Roseiflexus castenholzii (strain DSM 13941 / HLO8).